We begin with the raw amino-acid sequence, 352 residues long: tRNA (guanine(26)-N(2))-dimethyltransferase (352 aa).

The Trm1 methyltransferase domain occupies 4–350 (ILNKEGAVEF…ANYDEIARIL (347 aa)). S-adenosyl-L-methionine is bound by residues arginine 39, arginine 65, aspartate 83, aspartate 109, and alanine 110.

The protein belongs to the class I-like SAM-binding methyltransferase superfamily. Trm1 family.

The enzyme catalyses guanosine(26) in tRNA + 2 S-adenosyl-L-methionine = N(2)-dimethylguanosine(26) in tRNA + 2 S-adenosyl-L-homocysteine + 2 H(+). Its function is as follows. Dimethylates a single guanine residue at position 26 of a number of tRNAs using S-adenosyl-L-methionine as donor of the methyl groups. In Pyrobaculum islandicum (strain DSM 4184 / JCM 9189 / GEO3), this protein is tRNA (guanine(26)-N(2))-dimethyltransferase.